The following is a 418-amino-acid chain: Mitochondrial outer membrane protein SLC25A46 (418 aa).

2 positions are modified to phosphoserine: Ser-32 and Ser-35. A Phosphothreonine modification is found at Thr-45. Positions 46 to 96 are disordered; the sequence is PPDIPGSRNLHWGEKSPSYGVPSAPPTLEGSAEEPFPGGGEGPRPGPSSEQ. A Solcar 1 repeat occupies 96-187; that stretch reads QLNRFAGFGI…GIISEFTPLP (92 aa). A run of 6 helical transmembrane segments spans residues 103–123, 167–187, 202–222, 258–278, 314–334, and 382–402; these read FGIGLASLFTENVLAHPCIVL, FIVQGVTLGAEGIISEFTPLP, HLLLKCLTYMVAMPFYSASLI, LLPLFSLIFPTVLHGVLHYII, FPELIANFAASLCSDVILYPL, and VFGFYKGFGAVIIQYTLHATI. Residues 311-413 form a Solcar 2 repeat; that stretch reads DAYFPELIAN…QITKMIYSTL (103 aa).

Belongs to the mitochondrial carrier (TC 2.A.29) family. As to quaternary structure, associates with the mitochondrial contact site and cristae organizing system (MICOS) complex. May associate with the endoplasmic reticulum membrane protein complex (EMC).

It is found in the mitochondrion outer membrane. In terms of biological role, transmembrane protein of the mitochondrial outer membrane that controls mitochondrial organization. May regulate the assembly of the MICOS (mitochondrial contact site and cristae organizing system) complex which is essential to the biogenesis and dynamics of mitochondrial cristae, the inwards folds of the inner mitochondrial membrane. Through its interaction with the EMC (endoplasmic reticulum membrane protein complex), could regulate mitochondrial lipid homeostasis and thereby mitochondrial fission. This is Mitochondrial outer membrane protein SLC25A46 from Mus musculus (Mouse).